Reading from the N-terminus, the 286-residue chain is Bifunctional protein FolD (286 aa).

NADP(+) contacts are provided by residues 165-167 and Ser-190; that span reads GRS.

This sequence belongs to the tetrahydrofolate dehydrogenase/cyclohydrolase family. Homodimer.

The catalysed reaction is (6R)-5,10-methylene-5,6,7,8-tetrahydrofolate + NADP(+) = (6R)-5,10-methenyltetrahydrofolate + NADPH. The enzyme catalyses (6R)-5,10-methenyltetrahydrofolate + H2O = (6R)-10-formyltetrahydrofolate + H(+). The protein operates within one-carbon metabolism; tetrahydrofolate interconversion. Its function is as follows. Catalyzes the oxidation of 5,10-methylenetetrahydrofolate to 5,10-methenyltetrahydrofolate and then the hydrolysis of 5,10-methenyltetrahydrofolate to 10-formyltetrahydrofolate. The sequence is that of Bifunctional protein FolD from Staphylococcus aureus (strain bovine RF122 / ET3-1).